A 296-amino-acid polypeptide reads, in one-letter code: Cutinase est1 (296 aa).

Residues 1-35 (MSVTTPRREASLLSRAVAVAAAAAATVALAAPAQA) form the signal peptide. Residues 36 to 57 (ANPYERGPNPTESMLEARSGPF) form a disordered region. Tyr-95 is a binding site for poly(ethylene terephthalate). The active-site Nucleophile is the Ser-165. Poly(ethylene terephthalate) is bound by residues Met-166 and Trp-190. Catalysis depends on charge relay system residues Asp-211 and His-243. Residues Cys-276 and Cys-294 are joined by a disulfide bond.

This sequence belongs to the AB hydrolase superfamily. Monomer.

The protein localises to the secreted. The protein resides in the periplasm. It carries out the reaction (ethylene terephthalate)(n) + H2O = (ethylene terephthalate)(n-1) + 4-[(2-hydroxyethoxy)carbonyl]benzoate + H(+). The catalysed reaction is a butanoate ester + H2O = an aliphatic alcohol + butanoate + H(+). The enzyme catalyses cutin + H2O = cutin monomers.. Functionally, catalyzes the hydrolysis of cutin, a polyester that forms the structure of plant cuticle. Shows esterase activity towards p-nitrophenol-linked aliphatic esters (pNP-aliphatic esters). Capable of degrading the plastic poly(ethylene terephthalate) (PET), the most abundant polyester plastic in the world. Can also depolymerize the synthetic polyester poly(epsilon-caprolactone) (PCL). In Thermobifida alba (Thermomonospora alba), this protein is Cutinase est1.